Reading from the N-terminus, the 333-residue chain is Thiamine-monophosphate kinase (333 aa).

Mg(2+) is bound by residues D44, S58, T59, and D60. Residue H67 participates in substrate binding. Mg(2+) contacts are provided by D89 and D137. ATP-binding positions include 136–137 (GD) and R162. A Mg(2+)-binding site is contributed by D224. Residue S226 coordinates ATP. D227 serves as a coordination point for Mg(2+). 2 residues coordinate substrate: E278 and W320.

The protein belongs to the thiamine-monophosphate kinase family.

It carries out the reaction thiamine phosphate + ATP = thiamine diphosphate + ADP. The protein operates within cofactor biosynthesis; thiamine diphosphate biosynthesis; thiamine diphosphate from thiamine phosphate: step 1/1. Functionally, catalyzes the ATP-dependent phosphorylation of thiamine-monophosphate (TMP) to form thiamine-pyrophosphate (TPP), the active form of vitamin B1. The protein is Thiamine-monophosphate kinase of Mycobacterium tuberculosis (strain CDC 1551 / Oshkosh).